The chain runs to 450 residues: ATP-dependent protease ATPase subunit HslU (450 aa).

Residues Val29, 71–76 (GVGKTE), Asp261, Glu328, and Arg400 each bind ATP.

The protein belongs to the ClpX chaperone family. HslU subfamily. A double ring-shaped homohexamer of HslV is capped on each side by a ring-shaped HslU homohexamer. The assembly of the HslU/HslV complex is dependent on binding of ATP.

It is found in the cytoplasm. ATPase subunit of a proteasome-like degradation complex; this subunit has chaperone activity. The binding of ATP and its subsequent hydrolysis by HslU are essential for unfolding of protein substrates subsequently hydrolyzed by HslV. HslU recognizes the N-terminal part of its protein substrates and unfolds these before they are guided to HslV for hydrolysis. This is ATP-dependent protease ATPase subunit HslU from Rickettsia africae (strain ESF-5).